The sequence spans 37 residues: Large ribosomal subunit protein bL36 (37 aa).

It belongs to the bacterial ribosomal protein bL36 family.

In Nostoc sp. (strain PCC 7120 / SAG 25.82 / UTEX 2576), this protein is Large ribosomal subunit protein bL36.